Here is a 257-residue protein sequence, read N- to C-terminus: Melatonin receptor type 1A (257 aa).

Over 5–22 (LASIVNDGWSLSSLHCQL) the chain is Extracellular. Cysteine 20 and cysteine 97 form a disulfide bridge. The helical transmembrane segment at 23–43 (SGFLMGLSVIGSVFNITGIAI) threads the bilayer. Topologically, residues 44–64 (NRYCCICHSLRYNKLYSSTNS) are cytoplasmic. A helical transmembrane segment spans residues 65 to 85 (LCYVFLIWMLTLVAIVPNLCV). The Extracellular segment spans residues 86 to 107 (GTLQYDPRIYSCTFTQSVSSAY). Residues 108–128 (TIAVVVFHFIVPMLVVIFCYL) form a helical membrane-spanning segment. Residues 129–160 (RIWALVLQVRWRVKPDNKPKLKPQDFRNFVTM) are Cytoplasmic-facing. Residues 161–181 (FVVFVLFAICWAPLNFIGLVV) form a helical membrane-spanning segment. The Extracellular segment spans residues 182–194 (ASEPASMAPRIPE). The helical transmembrane segment at 195–215 (WLFVASYYMGYFNSCLNAIIY) threads the bilayer. Residues 216-257 (GLLNQNFRQEYRKIIVSLCTTKMFFVDSSNHVAHRIKRKPSP) lie on the Cytoplasmic side of the membrane.

The protein belongs to the G-protein coupled receptor 1 family.

Its subcellular location is the cell membrane. Functionally, high affinity receptor for melatonin. Likely to mediate the reproductive and circadian actions of melatonin. The activity of this receptor is mediated by pertussis toxin sensitive G proteins that inhibit adenylate cyclase activity. Possibly involved in sleep induction, by melatonin activation of the potassium channel KCNMA1/BK and the dissociation of G-beta and G-gamma subunits, thereby decreasing synaptic transmission. The polypeptide is Melatonin receptor type 1A (MTNR1A) (Bos taurus (Bovine)).